A 61-amino-acid chain; its full sequence is UPF0434 protein PFLU_3771 (61 aa).

This sequence belongs to the UPF0434 family.

In Pseudomonas fluorescens (strain SBW25), this protein is UPF0434 protein PFLU_3771.